The sequence spans 374 residues: Queuine tRNA-ribosyltransferase (374 aa).

The Proton acceptor role is filled by D94. Residues 94–98, D148, Q191, and G218 contribute to the substrate site; that span reads DSGGF. Residues 249–255 form an RNA binding region; the sequence is GVGSPDY. The Nucleophile role is filled by D268. The segment at 273-277 is RNA binding; important for wobble base 34 recognition; that stretch reads TRIGR. Residues C306, C308, C311, and H337 each contribute to the Zn(2+) site.

This sequence belongs to the queuine tRNA-ribosyltransferase family. Homodimer. Within each dimer, one monomer is responsible for RNA recognition and catalysis, while the other monomer binds to the replacement base PreQ1. Zn(2+) serves as cofactor.

It carries out the reaction 7-aminomethyl-7-carbaguanine + guanosine(34) in tRNA = 7-aminomethyl-7-carbaguanosine(34) in tRNA + guanine. Its pathway is tRNA modification; tRNA-queuosine biosynthesis. Functionally, catalyzes the base-exchange of a guanine (G) residue with the queuine precursor 7-aminomethyl-7-deazaguanine (PreQ1) at position 34 (anticodon wobble position) in tRNAs with GU(N) anticodons (tRNA-Asp, -Asn, -His and -Tyr). Catalysis occurs through a double-displacement mechanism. The nucleophile active site attacks the C1' of nucleotide 34 to detach the guanine base from the RNA, forming a covalent enzyme-RNA intermediate. The proton acceptor active site deprotonates the incoming PreQ1, allowing a nucleophilic attack on the C1' of the ribose to form the product. After dissociation, two additional enzymatic reactions on the tRNA convert PreQ1 to queuine (Q), resulting in the hypermodified nucleoside queuosine (7-(((4,5-cis-dihydroxy-2-cyclopenten-1-yl)amino)methyl)-7-deazaguanosine). This Acetivibrio thermocellus (strain ATCC 27405 / DSM 1237 / JCM 9322 / NBRC 103400 / NCIMB 10682 / NRRL B-4536 / VPI 7372) (Clostridium thermocellum) protein is Queuine tRNA-ribosyltransferase.